The following is an 808-amino-acid chain: MSVVRPKKVFQTPIDPGVSLRRKKDFYIWAATIGFAQLWRDIKAFKWYRPLQMADLASHYFYIPLGRLDPRILSSAPNDRMLIKTIPHEMSQDYDETGILGCPGREVVNAGSNNYGGFTRFEYGSASVIKLALRNLPFNPAPEELNTLVEREMADYMEADACATAISGYGANLLAFLTVAETAKLSDRQCIFLLDEESHSSMFVGAFLNKEAKFHRFKHNDIADLEYKLRTMKETSPNALVCVAIEGMYSLAGNVAPIPAILALRKVFNFCLLVDEAHSFMAIGCKGRGSFEWWQARGYECPLSEVDIMTATLSKSVGCTGGLVMANKIYASNLQHQARLQREEGDECLSTIVLFRALTLIRKPLFIERRMKTLEEKARYVAERLDEAGCLLLSPPGSPIICFPVGTVQQASNFVAECLKKGFAVACGVPPATPIWSCRVRVCIFATTSWGDILALVNTLIAVSCKLRIDGVQSMKFDTDSLPKVSIKEDIVSDEGNAADLALQEYVEQLAAKYPAEDCRAIAPLNVAQAREVFEYGVQSFEMYGIGASSVRWFYGTFDVFIRLEQRLAGLYPSLISHSGKCRAMLGSDANVMAVSLLSAVAGPMYAKDVLNLVLVPQNAPCYVKKGATLDKVQPSTRVTLYEDLRDLEVEGTKLQKHRYYHVTLYLETVDEDGSILDLSNRIKDILLTLKNAPSLTGLRLILDDSRGLGKIGPRHLGFLDQMESQHGVSFFSTALGPQLAAITTVVVFGSWFHSLNHQGGYVISSEAFTEAHTVSSKSFVFSTPPMIVQAAMSEKTLELLAGGSGLV.

It belongs to the class-II pyridoxal-phosphate-dependent aminotransferase family. BioF subfamily. The cofactor is pyridoxal 5'-phosphate.

The protein operates within mycotoxin biosynthesis. Functionally, aminotransferase; part of the gene cluster that mediates the biosynthesis of the host-selective toxins (HSTs) AAL-toxins, sphinganine-analog mycotoxins responsible for Alternaria stem canker on tomato by the tomato pathotype. The biosynthesis starts with the polyketide synthase ALT1-catalyzed C-16 carbon chain assembly from one starter acetyl-CoA unit with malonyl-CoA extender units. ALT1 also selectively transfers methyl groups at the first and the third cycle of chain elongation for AAL toxin. The C-16 polyketide chain is released from the enzyme by a nucleophilic attack of a carbanion, which is derived from R-carbon of glycin by decarboxylation, on the carbonyl carbon of polyketide acyl chain. This step is probably catalyzed by a pyridoxal 5'-phosphate-dependent aminoacyl transferase ALT4. The respective functions of the other enzymes encoded by the cluster have still to be elucidated. The sphingosine N-acyltransferase-like protein ALT7 seems not to act as a resistance/self-tolerance factor against the toxin in the toxin biosynthetic gene cluster, contrary to what is expected. The protein is Aminotransferase ALT4 of Alternaria alternata (Alternaria rot fungus).